Reading from the N-terminus, the 386-residue chain is MMVRKSTASNRRLQDKGDEEPVATVPKCREAILSIKPYVPGKPIEEVQRELGVKDVIKLASNENPLGPSPDAVQALQEASDRIFLYPDGNCYYLKEALAAKLGVKQENLIIGNGTDEILKMLAETYINPGDEIVVADPTFSEYEFAAQVMGGRAIKVPTRNFRHDLAAMAAAITPRTRLVFVCNPNNPTGTIVGQAALDGFLKQVPPSVLVVLDEAYSDYVTAEHYPNSLAYVRAGRANVIILRTFSKIYGLAGLRVGYGVAVPEIIRDLNRVREPFNVNLLAQVAAVAALKDEAHVGKSREVNSEGKDYLYSQFESLGLKYVPTEANFIFVDIQRDSREVFRQLLQKGVIVRTGDIFGYDTFLRVTIGTRRQNETFIRALREILA.

Positions 1-11 (MMVRKSTASNR) are enriched in polar residues. A disordered region spans residues 1-22 (MMVRKSTASNRRLQDKGDEEPV). The residue at position 248 (lysine 248) is an N6-(pyridoxal phosphate)lysine.

The protein belongs to the class-II pyridoxal-phosphate-dependent aminotransferase family. Histidinol-phosphate aminotransferase subfamily. In terms of assembly, homodimer. The cofactor is pyridoxal 5'-phosphate.

The catalysed reaction is L-histidinol phosphate + 2-oxoglutarate = 3-(imidazol-4-yl)-2-oxopropyl phosphate + L-glutamate. It functions in the pathway amino-acid biosynthesis; L-histidine biosynthesis; L-histidine from 5-phospho-alpha-D-ribose 1-diphosphate: step 7/9. This chain is Histidinol-phosphate aminotransferase, found in Moorella thermoacetica (strain ATCC 39073 / JCM 9320).